Reading from the N-terminus, the 107-residue chain is MARIRKSDQVIILAGKDKGKRGTVLRVLDDGHLVVEGVNRVKKHQKPNPMRNIQGGIVEKEMPIDASNVALFNPATQKADRVGSKVLEDGRKVRVFKSNGEMVDAQG.

It belongs to the universal ribosomal protein uL24 family. Part of the 50S ribosomal subunit.

Functionally, one of two assembly initiator proteins, it binds directly to the 5'-end of the 23S rRNA, where it nucleates assembly of the 50S subunit. In terms of biological role, one of the proteins that surrounds the polypeptide exit tunnel on the outside of the subunit. This Thiobacillus denitrificans (strain ATCC 25259 / T1) protein is Large ribosomal subunit protein uL24.